A 79-amino-acid chain; its full sequence is Quinohemoprotein amine dehydrogenase subunit gamma (79 aa).

Residues 7–16 (CTATTDPGWE) constitute a cross-link (4-cysteinyl-glutamic acid (Cys-Glu)). 2 consecutive cross-links (3-cysteinyl-aspartic acid (Cys-Asp)) follow at residues 27-33 (CQPMEAD) and 41-49 (CWWPAQVPD). Aspartate 33 (proton acceptor) is an active-site residue. The segment at residues 37-43 (CSDPCWW) is a cross-link (4'-cysteinyl-tryptophylquinone (Cys-Trp)). Tryptophan 43 carries the post-translational modification Tryptophylquinone.

This sequence belongs to the quinohemoprotein amine dehydrogenase subunit gamma family. In terms of assembly, heterotrimer of an alpha, a beta and a gamma subunit. It depends on cysteine tryptophylquinone residue as a cofactor. In terms of processing, the cysteine tryptophylquinone (CTQ) is generated by oxidation of the indole ring of a tryptophan residue to form tryptophylquinone, followed by covalent cross-linking with a cysteine residue.

The protein resides in the periplasm. It catalyses the reaction an aliphatic amine + A + H2O = an aldehyde + AH2 + NH4(+). In terms of biological role, catalyzes the oxidative deamination of a wide range of aliphatic monoamines and diamines. The physiological electron acceptor is an azurin-like blue protein. The protein is Quinohemoprotein amine dehydrogenase subunit gamma (qhnDH) of Pseudomonas putida (strain ATCC 47054 / DSM 6125 / CFBP 8728 / NCIMB 11950 / KT2440).